A 242-amino-acid chain; its full sequence is Caspase-14 (242 aa).

Positions 1-5 are excised as a propeptide; sequence MSNPR. Active-site residues include His89 and Cys132. Residues 147 to 152 constitute a propeptide that is removed on maturation; it reads EIVMVI.

It belongs to the peptidase C14A family. In terms of assembly, heterodimer of a large and a small subunit, both processed from the precursor; the mature active form is a p17/p10 dimer and the intermediate form a p20/p8 dimer. Post-translationally, maturation by proteolytic processing appears to be a two-step process. The precursor is processed by KLK7 to yield the p20/p8 intermediate form which acts on the precursor to yield the p17/p10 mature form. Initially, cleavage between Ile-152 and Lys-153 has been proposed to yield the large and small subunits of the active enzyme. As to expression, expressed in keratinocytes of adult skin suprabasal layers (from spinous layers to the stratum granulosum and stratum corneum) (at protein level). Expressed in keratinocytes of hair shaft and sebaceous glands (at protein level). In psoriatic skin only expressed at very low levels. The p17/10 mature form is expressed in epidermis stratum corneum, the p20/p8 intermediate form in epidermis upper granular cells of the stratum granulosum.

Its subcellular location is the cytoplasm. It localises to the nucleus. With respect to regulation, inhibited by caspase-1 inhibitor YVAD-FMK and the pan-caspase inhibitor VAD-FMK. Its function is as follows. Non-apoptotic caspase involved in epidermal differentiation. Is the predominant caspase in epidermal stratum corneum. Seems to play a role in keratinocyte differentiation and is required for cornification. Regulates maturation of the epidermis by proteolytically processing filaggrin. In vitro has a preference for the substrate [WY]-X-X-D motif and is active on the synthetic caspase substrate WEHD-ACF. Involved in processing of prosaposin in the epidermis. May be involved in retinal pigment epithelium cell barrier function. Involved in DNA degradation in differentiated keratinocytes probably by cleaving DFFA/ICAD leading to liberation of DFFB/CAD. This is Caspase-14 (CASP14) from Homo sapiens (Human).